The following is a 302-amino-acid chain: 33 kDa chaperonin (302 aa).

2 disulfides stabilise this stretch: cysteine 234-cysteine 236 and cysteine 267-cysteine 270.

Belongs to the HSP33 family. Post-translationally, under oxidizing conditions two disulfide bonds are formed involving the reactive cysteines. Under reducing conditions zinc is bound to the reactive cysteines and the protein is inactive.

It localises to the cytoplasm. Its function is as follows. Redox regulated molecular chaperone. Protects both thermally unfolding and oxidatively damaged proteins from irreversible aggregation. Plays an important role in the bacterial defense system toward oxidative stress. The polypeptide is 33 kDa chaperonin (Neisseria gonorrhoeae (strain NCCP11945)).